The sequence spans 291 residues: NAD kinase (291 aa).

The active-site Proton acceptor is the D73. NAD(+) contacts are provided by residues 73-74 (DG), 147-148 (ND), R175, D177, and Q246.

Belongs to the NAD kinase family. A divalent metal cation is required as a cofactor.

It localises to the cytoplasm. The catalysed reaction is NAD(+) + ATP = ADP + NADP(+) + H(+). Its function is as follows. Involved in the regulation of the intracellular balance of NAD and NADP, and is a key enzyme in the biosynthesis of NADP. Catalyzes specifically the phosphorylation on 2'-hydroxyl of the adenosine moiety of NAD to yield NADP. This chain is NAD kinase, found in Laribacter hongkongensis (strain HLHK9).